Reading from the N-terminus, the 81-residue chain is Putative CNGA1-overlapping antisense gene protein (81 aa).

As to expression, expressed in brain, notably in regions involved in long-term potentiation and long-term depression, such as hippocampal CA1 and CA3, dentate gyrus and cerebellar Purkinje layer.

The sequence is that of Putative CNGA1-overlapping antisense gene protein from Homo sapiens (Human).